Here is a 640-residue protein sequence, read N- to C-terminus: Chaperone protein HtpG (640 aa).

Residues M1 to R343 are a; substrate-binding. The interval E344–R564 is b. Residues L565–K640 are c.

This sequence belongs to the heat shock protein 90 family. In terms of assembly, homodimer.

Its subcellular location is the cytoplasm. In terms of biological role, molecular chaperone. Has ATPase activity. The polypeptide is Chaperone protein HtpG (Nitrosomonas europaea (strain ATCC 19718 / CIP 103999 / KCTC 2705 / NBRC 14298)).